Reading from the N-terminus, the 200-residue chain is Probable molybdenum cofactor guanylyltransferase (200 aa).

Residues 9–11 (LAG), lysine 21, aspartate 69, and aspartate 100 contribute to the GTP site. Mg(2+) is bound at residue aspartate 100.

The protein belongs to the MobA family. Requires Mg(2+) as cofactor.

It is found in the cytoplasm. It carries out the reaction Mo-molybdopterin + GTP + H(+) = Mo-molybdopterin guanine dinucleotide + diphosphate. Functionally, transfers a GMP moiety from GTP to Mo-molybdopterin (Mo-MPT) cofactor (Moco or molybdenum cofactor) to form Mo-molybdopterin guanine dinucleotide (Mo-MGD) cofactor. The polypeptide is Probable molybdenum cofactor guanylyltransferase (Bacillus mycoides (strain KBAB4) (Bacillus weihenstephanensis)).